Reading from the N-terminus, the 400-residue chain is MTDSLFPRLVLAKGREKSLLRRHPWIFSGGVARMEGKARSGETIDIVDHQGKWLARGAYSPSSQIRARVWTFDRNEAIDSAFFERRLQQAQTWRAWLAERDGLDSYRLIAGESDGLPGVTIDRFGNFFVLQLLSAGAEYQRAAIISALQNLFPDCAIYDRSDVAVRKKEGLELAQGPVVGELPPALLPITEHGMKLLVDIQGGHKTGYYLDQRDSRLATRRYVADKRVLNCFSYTGGFAVSALMGGCRQVTSVDTSQEALDVARQNVELNGLDLSKAEFVRDDVFKLLRKYRDQGEKFDVIVMDPPKFVENKSQLMGACRGYKDINMLAIQLLNPGGVLLTFSCSGLMTTDLFQKIIADAAIDAGRDVQFIEQFRQAADHPVIATYPEGLYLKGFACRVM.

One can recognise a PUA domain in the interval 6-84 (FPRLVLAKGR…NEAIDSAFFE (79 aa)).

Belongs to the methyltransferase superfamily. RlmI family.

It localises to the cytoplasm. The enzyme catalyses cytidine(1962) in 23S rRNA + S-adenosyl-L-methionine = 5-methylcytidine(1962) in 23S rRNA + S-adenosyl-L-homocysteine + H(+). Specifically methylates the cytosine at position 1962 (m5C1962) of 23S rRNA. In Klebsiella pneumoniae (strain 342), this protein is Ribosomal RNA large subunit methyltransferase I.